The sequence spans 227 residues: Phosphatidylserine decarboxylase proenzyme (227 aa).

Ser181 acts as the Schiff-base intermediate with substrate; via pyruvic acid in catalysis. Ser181 bears the Pyruvic acid (Ser); by autocatalysis mark.

It belongs to the phosphatidylserine decarboxylase family. PSD-A subfamily. In terms of assembly, heterodimer of a large membrane-associated beta subunit and a small pyruvoyl-containing alpha subunit. Requires pyruvate as cofactor. Post-translationally, is synthesized initially as an inactive proenzyme. Formation of the active enzyme involves a self-maturation process in which the active site pyruvoyl group is generated from an internal serine residue via an autocatalytic post-translational modification. Two non-identical subunits are generated from the proenzyme in this reaction, and the pyruvate is formed at the N-terminus of the alpha chain, which is derived from the carboxyl end of the proenzyme. The post-translation cleavage follows an unusual pathway, termed non-hydrolytic serinolysis, in which the side chain hydroxyl group of the serine supplies its oxygen atom to form the C-terminus of the beta chain, while the remainder of the serine residue undergoes an oxidative deamination to produce ammonia and the pyruvoyl prosthetic group on the alpha chain.

It is found in the cell membrane. The enzyme catalyses a 1,2-diacyl-sn-glycero-3-phospho-L-serine + H(+) = a 1,2-diacyl-sn-glycero-3-phosphoethanolamine + CO2. Its pathway is phospholipid metabolism; phosphatidylethanolamine biosynthesis; phosphatidylethanolamine from CDP-diacylglycerol: step 2/2. Its function is as follows. Catalyzes the formation of phosphatidylethanolamine (PtdEtn) from phosphatidylserine (PtdSer). The chain is Phosphatidylserine decarboxylase proenzyme from Anaplasma phagocytophilum (strain HZ).